Consider the following 140-residue polypeptide: DegV domain-containing 15.5 kDa protein (140 aa).

Residues 4–140 form the DegV domain; sequence QIIVTDSTSD…ELVLLQSKKI (137 aa). The hexadecanoate site is built by T61 and S93.

Its function is as follows. May bind long-chain fatty acids, such as palmitate, and may play a role in lipid transport or fatty acid metabolism. In Staphylococcus aureus, this protein is DegV domain-containing 15.5 kDa protein.